We begin with the raw amino-acid sequence, 312 residues long: Methionyl-tRNA formyltransferase (312 aa).

109-112 (SLLP) contacts (6S)-5,6,7,8-tetrahydrofolate.

The protein belongs to the Fmt family.

It carries out the reaction L-methionyl-tRNA(fMet) + (6R)-10-formyltetrahydrofolate = N-formyl-L-methionyl-tRNA(fMet) + (6S)-5,6,7,8-tetrahydrofolate + H(+). Functionally, attaches a formyl group to the free amino group of methionyl-tRNA(fMet). The formyl group appears to play a dual role in the initiator identity of N-formylmethionyl-tRNA by promoting its recognition by IF2 and preventing the misappropriation of this tRNA by the elongation apparatus. The sequence is that of Methionyl-tRNA formyltransferase from Listeria innocua serovar 6a (strain ATCC BAA-680 / CLIP 11262).